The primary structure comprises 214 residues: MAGRLREMRCELSFLKNADGSACFSQGATCIWASCSGPGDVHASKASDEAMTLDISYRANCGDNKFNVLNNIIHSTLSNAINLELFPHTTISVTVHGIQDDGSMGAVAINGACFALLDNGMPFETVFCGVLIVRVKDELIIDPTAKQEAASTGRVLFSVCKGSDGHPEVCAMDAIGHWDFIQLEAAWSLAQPSASAIFDFYKTVMKRKLSVDEQ.

It belongs to the RNase PH family. In terms of assembly, homodimer. Component of the RNA exosome complex. Interacts with crn-4; interaction promotes the DNase activity of crn-4. Interacts with crn-3, cps-6 and cyn-13.

Its subcellular location is the cytoplasm. It is found in the nucleus. Functionally, non-catalytic component of the RNA exosome complex which has 3'-&gt;5' exoribonuclease activity and participates in a multitude of cellular RNA processing and degradation events. Involved in apoptotic DNA degradation. In vitro, does not bind or digest single-stranded RNA. In vitro, binds to double-stranded DNA without detectable DNase activity. In Caenorhabditis elegans, this protein is Exosome complex component RRP46 homolog.